The primary structure comprises 444 residues: Acyl-CoA 6-desaturase (444 aa).

Residues 1-131 (MGKGGNQGEG…DMNLFKTNHV (131 aa)) lie on the Cytoplasmic side of the membrane. Residues 18–95 (MPTFSWEEIQ…LKPLLIGELA (78 aa)) form the Cytochrome b5 heme-binding domain. The helical transmembrane segment at 132–152 (FFLLLLAHIIALESIAWFTVF) threads the bilayer. Residues 153-157 (YFGNG) are Lumenal-facing. Residues 158–178 (WIPTLITAFVLATSQAQAGWL) traverse the membrane as a helical segment. The Cytoplasmic segment spans residues 179–264 (QHDYGHLSVY…KYLPYNHQHE (86 aa)). Positions 180–184 (HDYGH) match the Histidine box-1 motif. The Histidine box-2 signature appears at 217 to 221 (HFQHH). Residues 265-285 (YFFLIGPPLLIPMYFQYQIIM) form a helical membrane-spanning segment. Topologically, residues 286–305 (TMIVHKNWVDLAWAISYYIR) are lumenal. A helical transmembrane segment spans residues 306 to 326 (FFVTYIPFYGILGALLFLNFI). The Cytoplasmic portion of the chain corresponds to 327-444 (RFLESHWFVW…KLWLDAYLHK (118 aa)). Residues 382-386 (QIEHH) carry the Histidine box-3 motif.

The protein belongs to the fatty acid desaturase type 1 family.

It localises to the endoplasmic reticulum membrane. The enzyme catalyses (9Z,12Z)-octadecadienoyl-CoA + 2 Fe(II)-[cytochrome b5] + O2 + 2 H(+) = (6Z,9Z,12Z)-octadecatrienoyl-CoA + 2 Fe(III)-[cytochrome b5] + 2 H2O. It catalyses the reaction (9Z,12Z,15Z)-octadecatrienoyl-CoA + 2 Fe(II)-[cytochrome b5] + O2 + 2 H(+) = (6Z,9Z,12Z,15Z)-octadecatetraenoyl-CoA + 2 Fe(III)-[cytochrome b5] + 2 H2O. The catalysed reaction is (9Z,12Z,15Z,18Z,21Z)-tetracosapentaenoyl-CoA + 2 Fe(II)-[cytochrome b5] + O2 + 2 H(+) = (6Z,9Z,12Z,15Z,18Z,21Z)-tetracosahexaenoyl-CoA + 2 Fe(III)-[cytochrome b5] + 2 H2O. It carries out the reaction (11E)-octadecenoyl-CoA + 2 Fe(II)-[cytochrome b5] + O2 + 2 H(+) = (6Z,11E)-octadecadienoyl-CoA + 2 Fe(III)-[cytochrome b5] + 2 H2O. The enzyme catalyses (11Z,14Z)-eicosadienoyl-CoA + 2 Fe(II)-[cytochrome b5] + O2 + 2 H(+) = (8Z,11Z,14Z)-eicosatrienoyl-CoA + 2 Fe(III)-[cytochrome b5] + 2 H2O. It catalyses the reaction (11Z,14Z,17Z)-eicosatrienoyl-CoA + 2 Fe(II)-[cytochrome b5] + O2 + 2 H(+) = (8Z,11Z,14Z,17Z)-eicosatetraenoyl-CoA + 2 Fe(III)-[cytochrome b5] + 2 H2O. It participates in lipid metabolism; polyunsaturated fatty acid biosynthesis. In terms of biological role, involved in the biosynthesis of highly unsaturated fatty acids (HUFA) from the essential polyunsaturated fatty acids (PUFA) linoleic acid (LA) (18:2n-6) and alpha-linolenic acid (ALA) (18:3n-3) precursors, acting as a fatty acyl-coenzyme A (CoA) desaturase that introduces a cis double bond at carbon 6 of the fatty acyl chain. Catalyzes the first and rate limiting step in this pathway which is the desaturation of LA (18:2n-6) and ALA (18:3n-3) into gamma-linoleate (GLA) (18:3n-6) and stearidonate (18:4n-3), respectively. Subsequently, in the biosynthetic pathway of HUFA n-3 series, it desaturates tetracosapentaenoate (24:5n-3) to tetracosahexaenoate (24:6n-3), which is then converted to docosahexaenoate (DHA)(22:6n-3), an important lipid for nervous system function. It can also desaturate (11E)-octadecenoate (trans-vaccenoate) at carbon 6 generating (6Z,11E)-octadecadienoate. In addition to Delta-6 activity, this enzyme exhibits Delta-8 activity with slight biases toward n-3 fatty acyl-CoA substrates. The chain is Acyl-CoA 6-desaturase (FADS2) from Macaca fascicularis (Crab-eating macaque).